A 451-amino-acid polypeptide reads, in one-letter code: Phosphoglucosamine mutase (451 aa).

Catalysis depends on Ser-107, which acts as the Phosphoserine intermediate. Ser-107, Asp-246, Asp-248, and Asp-250 together coordinate Mg(2+). Ser-107 carries the post-translational modification Phosphoserine.

This sequence belongs to the phosphohexose mutase family. Requires Mg(2+) as cofactor. In terms of processing, activated by phosphorylation.

It carries out the reaction alpha-D-glucosamine 1-phosphate = D-glucosamine 6-phosphate. In terms of biological role, catalyzes the conversion of glucosamine-6-phosphate to glucosamine-1-phosphate. The polypeptide is Phosphoglucosamine mutase (Burkholderia ambifaria (strain ATCC BAA-244 / DSM 16087 / CCUG 44356 / LMG 19182 / AMMD) (Burkholderia cepacia (strain AMMD))).